The following is a 199-amino-acid chain: Peroxynitrite isomerase (199 aa).

Residues 21 to 27 (GEWEGRG) carry the GXWXGXG motif. Histidine 190 is a binding site for heme b.

This sequence belongs to the nitrobindin family. In terms of assembly, homodimer. Heme b is required as a cofactor.

It carries out the reaction peroxynitrite = nitrate. It functions in the pathway nitrogen metabolism. Functionally, heme-binding protein able to scavenge peroxynitrite and to protect free L-tyrosine against peroxynitrite-mediated nitration, by acting as a peroxynitrite isomerase that converts peroxynitrite to nitrate. Therefore, this protein likely plays a role in peroxynitrite sensing and in the detoxification of reactive nitrogen and oxygen species (RNS and ROS, respectively). Is able to bind nitric oxide (NO) in vitro, but may act as a sensor of peroxynitrite levels in vivo. This is Peroxynitrite isomerase from Paenarthrobacter aurescens (strain TC1).